Here is a 220-residue protein sequence, read N- to C-terminus: Uracil-DNA glycosylase (220 aa).

The active-site Proton acceptor is the aspartate 60.

This sequence belongs to the uracil-DNA glycosylase (UDG) superfamily. UNG family.

Its subcellular location is the cytoplasm. The enzyme catalyses Hydrolyzes single-stranded DNA or mismatched double-stranded DNA and polynucleotides, releasing free uracil.. Functionally, excises uracil residues from the DNA which can arise as a result of misincorporation of dUMP residues by DNA polymerase or due to deamination of cytosine. This is Uracil-DNA glycosylase from Francisella tularensis subsp. holarctica (strain FTNF002-00 / FTA).